Consider the following 184-residue polypeptide: Photosystem I assembly protein Ycf4 (184 aa).

The next 2 membrane-spanning stretches (helical) occupy residues 22–42 and 57–77; these read FFWA…GTSS and IPFF…LFIS.

This sequence belongs to the Ycf4 family.

Its subcellular location is the plastid. The protein localises to the chloroplast thylakoid membrane. Its function is as follows. Seems to be required for the assembly of the photosystem I complex. The sequence is that of Photosystem I assembly protein Ycf4 from Ceratophyllum demersum (Rigid hornwort).